The chain runs to 438 residues: Xylose isomerase (438 aa).

Catalysis depends on residues His100 and Asp103. Residues Glu231, Glu267, His270, Asp295, Asp306, Asp308, and Asp338 each contribute to the Mg(2+) site.

It belongs to the xylose isomerase family. Homotetramer. It depends on Mg(2+) as a cofactor.

The protein localises to the cytoplasm. It carries out the reaction alpha-D-xylose = alpha-D-xylulofuranose. The polypeptide is Xylose isomerase (Pseudomonas syringae pv. tomato (strain ATCC BAA-871 / DC3000)).